A 459-amino-acid chain; its full sequence is MIKDPFARLGLDREVLTVTQLNGRARVLLEDVFSNIWVEGEISNLARPASGHVYFTLKDSGAQVRCALFRQNAARVRQALKDGLAVKVRGKVSLFEGRGDYQLILDTVEPAGDGALRLAFDALKDKLSAEGLFSAERKVPLPAHPQRIGIISSPTGAVIRDIISVFRRRAPQVVLTLIPTAVQGREATAQIVRALQLADARGFDALILARGGGSLEDLWCFNEEAVARAVDACVTPIVSAVGHETDVSISDFVADVRAPTPSAAAELLAPDSSDLQRRVDNLHRRLVMRMRDRLVRDRLRLDGLARRLRHPGERLRQQAQRLDDLDMRLRRAFERSLNTRRERLIRLETRLGAQHPGRQLALLRQRLDSLAERLPRAMREGLKGRRLQLHSQMQTLHVVSPLATLGRGYSILLDDRGQAIRSAGQTRPGQRLSARLGEGELQVRVEDNHLTPVTLSLLD.

This sequence belongs to the XseA family. Heterooligomer composed of large and small subunits.

The protein localises to the cytoplasm. It carries out the reaction Exonucleolytic cleavage in either 5'- to 3'- or 3'- to 5'-direction to yield nucleoside 5'-phosphates.. Bidirectionally degrades single-stranded DNA into large acid-insoluble oligonucleotides, which are then degraded further into small acid-soluble oligonucleotides. The polypeptide is Exodeoxyribonuclease 7 large subunit (Pseudomonas fluorescens (strain ATCC BAA-477 / NRRL B-23932 / Pf-5)).